The primary structure comprises 320 residues: Large ribosomal subunit protein uL10y (320 aa).

A disordered region spans residues 289 to 320; it reads AGGGAPAAAKVEEKEESDEEDYGGDFGLFDEE. Residues 302 to 320 show a composition bias toward acidic residues; that stretch reads KEESDEEDYGGDFGLFDEE. Residue serine 305 is modified to Phosphoserine. A Phosphotyrosine modification is found at tyrosine 310.

It belongs to the universal ribosomal protein uL10 family. In terms of assembly, P0 forms a pentameric complex by interaction with dimers of P1 and P2.

In terms of biological role, ribosomal protein P0 is the functional equivalent of E.coli protein L10. The sequence is that of Large ribosomal subunit protein uL10y (RPP0B) from Arabidopsis thaliana (Mouse-ear cress).